Consider the following 214-residue polypeptide: tRNA (guanine-N(7)-)-methyltransferase (214 aa).

Residues aspartate 35, glutamate 60, asparagine 87, and aspartate 113 each contribute to the S-adenosyl-L-methionine site. Residue aspartate 113 is part of the active site. The substrate site is built by lysine 117 and aspartate 149.

This sequence belongs to the class I-like SAM-binding methyltransferase superfamily. TrmB family.

The enzyme catalyses guanosine(46) in tRNA + S-adenosyl-L-methionine = N(7)-methylguanosine(46) in tRNA + S-adenosyl-L-homocysteine. It participates in tRNA modification; N(7)-methylguanine-tRNA biosynthesis. Its function is as follows. Catalyzes the formation of N(7)-methylguanine at position 46 (m7G46) in tRNA. In Prochlorococcus marinus (strain NATL2A), this protein is tRNA (guanine-N(7)-)-methyltransferase.